The primary structure comprises 322 residues: Lipoyl synthase (322 aa).

Over residues 1–12 (MVTVLNTVNQSG) the composition is skewed to polar residues. Residues 1 to 22 (MVTVLNTVNQSGRLRHPEKAHR) are disordered. The [4Fe-4S] cluster site is built by Cys60, Cys65, Cys71, Cys86, Cys90, Cys93, and Ser299. One can recognise a Radical SAM core domain in the interval 72–288 (WEKKHATFMI…ETIGKTKGFL (217 aa)).

The protein belongs to the radical SAM superfamily. Lipoyl synthase family. Requires [4Fe-4S] cluster as cofactor.

It localises to the cytoplasm. The catalysed reaction is [[Fe-S] cluster scaffold protein carrying a second [4Fe-4S](2+) cluster] + N(6)-octanoyl-L-lysyl-[protein] + 2 oxidized [2Fe-2S]-[ferredoxin] + 2 S-adenosyl-L-methionine + 4 H(+) = [[Fe-S] cluster scaffold protein] + N(6)-[(R)-dihydrolipoyl]-L-lysyl-[protein] + 4 Fe(3+) + 2 hydrogen sulfide + 2 5'-deoxyadenosine + 2 L-methionine + 2 reduced [2Fe-2S]-[ferredoxin]. The protein operates within protein modification; protein lipoylation via endogenous pathway; protein N(6)-(lipoyl)lysine from octanoyl-[acyl-carrier-protein]: step 2/2. Its function is as follows. Catalyzes the radical-mediated insertion of two sulfur atoms into the C-6 and C-8 positions of the octanoyl moiety bound to the lipoyl domains of lipoate-dependent enzymes, thereby converting the octanoylated domains into lipoylated derivatives. This chain is Lipoyl synthase, found in Brucella abortus (strain S19).